We begin with the raw amino-acid sequence, 493 residues long: ATP synthase subunit beta, chloroplastic (493 aa).

170 to 177 serves as a coordination point for ATP; that stretch reads GGAGVGKT.

The protein belongs to the ATPase alpha/beta chains family. In terms of assembly, F-type ATPases have 2 components, CF(1) - the catalytic core - and CF(0) - the membrane proton channel. CF(1) has five subunits: alpha(3), beta(3), gamma(1), delta(1), epsilon(1). CF(0) has four main subunits: a(1), b(1), b'(1) and c(9-12).

The protein localises to the plastid. It localises to the chloroplast thylakoid membrane. The catalysed reaction is ATP + H2O + 4 H(+)(in) = ADP + phosphate + 5 H(+)(out). In terms of biological role, produces ATP from ADP in the presence of a proton gradient across the membrane. The catalytic sites are hosted primarily by the beta subunits. This Adiantum capillus-veneris (Maidenhair fern) protein is ATP synthase subunit beta, chloroplastic.